The following is a 313-amino-acid chain: Malate dehydrogenase (313 aa).

NAD(+)-binding positions include 8-13 (GAGNVG) and D33. Substrate is bound by residues R83 and R89. NAD(+)-binding positions include N96 and 119-121 (ISN). Substrate-binding residues include N121 and R152. Residue H176 is the Proton acceptor of the active site.

It belongs to the LDH/MDH superfamily. MDH type 3 family.

The enzyme catalyses (S)-malate + NAD(+) = oxaloacetate + NADH + H(+). Functionally, catalyzes the reversible oxidation of malate to oxaloacetate. This is Malate dehydrogenase from Bacteroides thetaiotaomicron (strain ATCC 29148 / DSM 2079 / JCM 5827 / CCUG 10774 / NCTC 10582 / VPI-5482 / E50).